The primary structure comprises 437 residues: Aminopeptidase G (437 aa).

Catalysis depends on residues C70, H361, and N382.

This sequence belongs to the peptidase C1 family.

It is found in the cytoplasm. This Lactobacillus delbrueckii subsp. lactis protein is Aminopeptidase G (pepG).